The sequence spans 415 residues: DNA polymerase IV 2 (415 aa).

Positions 7–183 constitute a UmuC domain; it reads ILHADLDAFY…LPVSLMWGVG (177 aa). Mg(2+) contacts are provided by D11 and D101. E102 is an active-site residue.

It belongs to the DNA polymerase type-Y family. As to quaternary structure, monomer. It depends on Mg(2+) as a cofactor.

It is found in the cytoplasm. The catalysed reaction is DNA(n) + a 2'-deoxyribonucleoside 5'-triphosphate = DNA(n+1) + diphosphate. In terms of biological role, poorly processive, error-prone DNA polymerase involved in untargeted mutagenesis. Copies undamaged DNA at stalled replication forks, which arise in vivo from mismatched or misaligned primer ends. These misaligned primers can be extended by PolIV. Exhibits no 3'-5' exonuclease (proofreading) activity. May be involved in translesional synthesis, in conjunction with the beta clamp from PolIII. In Mesorhizobium japonicum (strain LMG 29417 / CECT 9101 / MAFF 303099) (Mesorhizobium loti (strain MAFF 303099)), this protein is DNA polymerase IV 2 (dinB2).